Consider the following 261-residue polypeptide: Claudin-18 (261 aa).

Residues 1-6 lie on the Cytoplasmic side of the membrane; sequence MATTTC. A helical membrane pass occupies residues 7 to 27; sequence QVVGLLLSLLGLAGCIAATGM. Topologically, residues 28–80 are extracellular; it reads DMWSTQDLYDNPVTSVFQYEGLWRSCVQQSSGFTECRPYFTILGLPAMLQAVR. A helical transmembrane segment spans residues 81–101; that stretch reads ALMIVGIVLGVIGILVSIFAL. Residues 102–122 lie on the Cytoplasmic side of the membrane; sequence KCIRIGSMDDSAKAKMTLTSG. A helical transmembrane segment spans residues 123-143; that stretch reads IMFIISGVCAIIGVSVFANML. Residues 144-173 are Extracellular-facing; it reads VTNFWMSTANMYSGMGGMVQTVQTRYTFGA. Residues 174 to 194 traverse the membrane as a helical segment; that stretch reads ALFVGWIAGGLTLIGGVMMCI. The Cytoplasmic portion of the chain corresponds to 195-261; the sequence is ACRGLTPDDR…QSHPTKYDYV (67 aa). Positions 195–261 are required for role in regulation of RANKL-induced osteoclast differentiation; the sequence is ACRGLTPDDR…QSHPTKYDYV (67 aa). S214 carries the post-translational modification Phosphoserine. Residues 242-261 form a disordered region; sequence DGGARTEDDEQSHPTKYDYV.

The protein belongs to the claudin family. In terms of assembly, interacts with TJP2/ZO-2. Interacts with TJP1/ZO-1. Interacts with YAP1 (phosphorylated); the interaction sequesters YAP1 away from the nucleus and thereby restricts transcription of YAP1 target genes. Interacts with CLDN19. As to expression, expressed in the lung (at protein level).

The protein resides in the cell junction. It is found in the tight junction. Its subcellular location is the cell membrane. In terms of biological role, involved in alveolar fluid homeostasis via regulation of alveolar epithelial tight junction composition and therefore ion transport and solute permeability, potentially via downstream regulation of the actin cytoskeleton organization and beta-2-adrenergic signaling. Required for lung alveolarization and maintenance of the paracellular alveolar epithelial barrier. Acts to maintain epithelial progenitor cell proliferation and organ size, via regulation of YAP1 localization away from the nucleus and thereby restriction of YAP1 target gene transcription. Acts as a negative regulator of RANKL-induced osteoclast differentiation, potentially via relocation of TJP2/ZO-2 away from the nucleus, subsequently involved in bone resorption in response to calcium deficiency. Mediates the osteoprotective effects of estrogen, potentially via acting downstream of estrogen signaling independently of RANKL signaling pathways. Required for the formation of the gastric paracellular barrier via its role in tight junction formation, thereby involved in the response to gastric acidification. The protein is Claudin-18 of Rattus norvegicus (Rat).